The primary structure comprises 480 residues: UDP-glucose 6-dehydrogenase 3 (480 aa).

Residues 8 to 13, D33, R38, 86 to 90, 127 to 128, and E161 each bind NAD(+); these read GAGYVG, VNTPT, and ST. Residues 157 to 161, 216 to 223, and 256 to 269 contribute to the substrate site; these read EFLAE, KLAANAFL, and RIGPKFLNSSVGFG. The Nucleophile role is filled by C272. An NAD(+)-binding site is contributed by 272–275; sequence CFQK. 334 to 335 lines the substrate pocket; that stretch reads FK. R342 lines the NAD(+) pocket. Substrate is bound at residue R447.

This sequence belongs to the UDP-glucose/GDP-mannose dehydrogenase family.

It catalyses the reaction UDP-alpha-D-glucose + 2 NAD(+) + H2O = UDP-alpha-D-glucuronate + 2 NADH + 3 H(+). It participates in nucleotide-sugar biosynthesis; UDP-alpha-D-glucuronate biosynthesis; UDP-alpha-D-glucuronate from UDP-alpha-D-glucose: step 1/1. Inhibited by UDP-xylose. Functionally, involved in the biosynthesis of UDP-glucuronic acid (UDP-GlcA), providing nucleotide sugars for cell-wall polymers. Required for the formation of cell wall ingrowths on the outer cell walls of nematode-induced syncytia. This Arabidopsis thaliana (Mouse-ear cress) protein is UDP-glucose 6-dehydrogenase 3 (UGD3).